Reading from the N-terminus, the 629-residue chain is tRNA uridine 5-carboxymethylaminomethyl modification enzyme MnmG (629 aa).

Residues G13 to G18, V125, and S180 each bind FAD. G273–F287 lines the NAD(+) pocket. FAD is bound at residue Q370.

The protein belongs to the MnmG family. In terms of assembly, homodimer. Heterotetramer of two MnmE and two MnmG subunits. FAD serves as cofactor.

The protein resides in the cytoplasm. Functionally, NAD-binding protein involved in the addition of a carboxymethylaminomethyl (cmnm) group at the wobble position (U34) of certain tRNAs, forming tRNA-cmnm(5)s(2)U34. This Photobacterium profundum (strain SS9) protein is tRNA uridine 5-carboxymethylaminomethyl modification enzyme MnmG.